The sequence spans 139 residues: Class I hydrophobin A (139 aa).

Residues 1-18 (MKFSIAAAVLALASAVVA) form the signal peptide. 4 disulfides stabilise this stretch: Cys-45/Cys-113, Cys-53/Cys-107, Cys-54/Cys-88, and Cys-114/Cys-133.

It belongs to the fungal hydrophobin family. As to quaternary structure, self-assembles to form functional amyloid fibrils called rodlets. Self-assembly into fibrillar rodlets occurs spontaneously at hydrophobic:hydrophilic interfaces and the rodlets further associate laterally to form amphipathic monolayers.

It localises to the secreted. The protein resides in the cell wall. Its function is as follows. Aerial growth, conidiation, and dispersal of filamentous fungi in the environment rely upon a capability of their secreting small amphipathic proteins called hydrophobins (HPBs) with low sequence identity. Class I can self-assemble into an outermost layer of rodlet bundles on aerial cell surfaces, conferring cellular hydrophobicity that supports fungal growth, development and dispersal; whereas Class II form highly ordered films at water-air interfaces through intermolecular interactions but contribute nothing to the rodlet structure. HYPA is a class I hydrophobin that contributes to surface hydrophobicity, and prevents recognition by the cellular immune defense system. The sequence is that of Class I hydrophobin A from Arthroderma benhamiae (strain ATCC MYA-4681 / CBS 112371) (Trichophyton mentagrophytes).